We begin with the raw amino-acid sequence, 321 residues long: Secreted RxLR effector protein 71 (321 aa).

The N-terminal stretch at 1-23 is a signal peptide; the sequence is MRPTGWRWPVLSLLLVLLPFQAA. The short motif at 84–87 is the RxLR element; it reads RSLR. N114 carries an N-linked (GlcNAc...) asparagine glycan. Positions 210-237 are disordered; that stretch reads VSLGRDGNGPVRGISSSPTRLTRPRMGG.

It belongs to the RxLR effector family.

Its subcellular location is the secreted. The protein localises to the host cell. Secreted effector that partially suppresses the host cell death induced by cell death-inducing proteins. In Plasmopara viticola (Downy mildew of grapevine), this protein is Secreted RxLR effector protein 71.